Reading from the N-terminus, the 449-residue chain is C4-dicarboxylate transport protein (449 aa).

A run of 8 helical transmembrane segments spans residues 18–38 (PFYLQLYFWVIIAIILGALLG), 61–81 (MIISPVIFLTIVTGIASVAHV), 93–113 (VYFLFFSTLALLLGLVVAHVV), 159–179 (FVGDNILQVLFVAVLFGIALA), 202–222 (LVQMLMKMAPIGAFGAIAFTI), 244–264 (SLLFVLVILGAVSWLCGFSIL), 346–366 (LFLVAMLSSKGAAGVSGAGFI), and 369–389 (AATLAVVPEVPIAGMALILGV).

It belongs to the dicarboxylate/amino acid:cation symporter (DAACS) (TC 2.A.23) family.

The protein resides in the cell inner membrane. Responsible for the transport of dicarboxylates such as succinate, fumarate, and malate from the periplasm across the membrane. This chain is C4-dicarboxylate transport protein, found in Xylella fastidiosa (strain M23).